We begin with the raw amino-acid sequence, 445 residues long: C-terminal-binding protein 2 (445 aa).

Arg22 is modified (asymmetric dimethylarginine). NAD(+)-binding positions include Ser106, 186-191 (IGFGRT), Asp210, 243-249 (CNLNEHN), 270-272 (AAR), and Asp296. Arg272 is an active-site residue. Glu301 is a catalytic residue. Residue His321 is the Proton donor of the active site. 321–324 (HTAW) provides a ligand contact to NAD(+). Residues 414–445 (THNLPTVAHPSQAPSPNQPTKHGDNREHPNEQ) form a disordered region. A Phosphoserine; by HIPK2 modification is found at Ser428. Over residues 434-445 (KHGDNREHPNEQ) the composition is skewed to basic and acidic residues.

This sequence belongs to the D-isomer specific 2-hydroxyacid dehydrogenase family. In terms of assembly, interacts with HIPK2, ZNF217 and PNN. Interacts with the transcription factors BKLF, delta EF1/AREB6/ZEB, EVI-1 and Friend of GATA (FOG) via the consensus motif P-X-[DNS]-L-[STVA]. Can form a complex with BKLF on a CACCC-box oligonucleotide. Can form homodimers or heterodimers of CTBP1 and CTBP2. Interacts with NRIP1 and WIZ. Interacts with PRDM16; represses white adipose tissue (WAT)-specific genes expression. Interacts with MCRIP1. Post-translationally, phosphorylation by HIPK2 on Ser-428 induces proteasomal degradation. In terms of tissue distribution, isoform 2 is specifically localized in synaptic ribbon (at protein level).

The protein localises to the nucleus. Its subcellular location is the synapse. Corepressor targeting diverse transcription regulators. Functions in brown adipose tissue (BAT) differentiation. Isoform 2 probably acts as a scaffold for specialized synapses. In Rattus norvegicus (Rat), this protein is C-terminal-binding protein 2 (Ctbp2).